A 268-amino-acid chain; its full sequence is MRITVYSNDGSSSRQVADKLTNKLINNGFTMDAQTPEVVISVGGDGTLLSAFHRYADALDQIRFIGVHTGHLGFYTDWRDFEVDDLVVALQEDLGQSISYPLLEVKITYADTNEVQHFLALNEVTLRRYAATLRTDVYIKENFFESFRGDGLCVSTPTGSTAYGKSIGGAVLHPRLEAMQLTEIASINNRVYRTLAAPIVLPSDEWLLLKPSRTSDYVVTIDQFTFKDRPIESMQFKIAKERIQFARYRHTHFWDRVEDAFIGSKHEI.

Asp45 (proton acceptor) is an active-site residue. Residues 45-46 (DG), 122-123 (NE), Arg148, Asp150, 161-166 (TAYGKS), Ala185, and Gln223 contribute to the NAD(+) site.

The protein belongs to the NAD kinase family. A divalent metal cation serves as cofactor.

It localises to the cytoplasm. The enzyme catalyses NAD(+) + ATP = ADP + NADP(+) + H(+). In terms of biological role, involved in the regulation of the intracellular balance of NAD and NADP, and is a key enzyme in the biosynthesis of NADP. Catalyzes specifically the phosphorylation on 2'-hydroxyl of the adenosine moiety of NAD to yield NADP. The polypeptide is NAD kinase (Latilactobacillus sakei subsp. sakei (strain 23K) (Lactobacillus sakei subsp. sakei)).